Reading from the N-terminus, the 199-residue chain is Cytochrome c oxidase subunit 2 (199 aa).

The helical transmembrane segment at 1-13 (AICSLVLYLLSLM) threads the bilayer. Residues 14–26 (LMEKLSSNTVDAQ) lie on the Mitochondrial matrix side of the membrane. A helical transmembrane segment spans residues 27–54 (EVELIWTILPAIVLILLALPSLQILYMM). At 55 to 199 (DEIDEPDLTL…SSLLSSSSSL (145 aa)) the chain is on the mitochondrial intermembrane side. His128, Cys163, Glu165, Cys167, His171, and Met174 together coordinate Cu cation. Glu165 is a Mg(2+) binding site.

The protein belongs to the cytochrome c oxidase subunit 2 family. As to quaternary structure, component of the cytochrome c oxidase (complex IV, CIV), a multisubunit enzyme composed of 14 subunits. The complex is composed of a catalytic core of 3 subunits MT-CO1, MT-CO2 and MT-CO3, encoded in the mitochondrial DNA, and 11 supernumerary subunits COX4I, COX5A, COX5B, COX6A, COX6B, COX6C, COX7A, COX7B, COX7C, COX8 and NDUFA4, which are encoded in the nuclear genome. The complex exists as a monomer or a dimer and forms supercomplexes (SCs) in the inner mitochondrial membrane with NADH-ubiquinone oxidoreductase (complex I, CI) and ubiquinol-cytochrome c oxidoreductase (cytochrome b-c1 complex, complex III, CIII), resulting in different assemblies (supercomplex SCI(1)III(2)IV(1) and megacomplex MCI(2)III(2)IV(2)). Found in a complex with TMEM177, COA6, COX18, COX20, SCO1 and SCO2. Interacts with TMEM177 in a COX20-dependent manner. Interacts with COX20. Interacts with COX16. It depends on Cu cation as a cofactor.

The protein localises to the mitochondrion inner membrane. The catalysed reaction is 4 Fe(II)-[cytochrome c] + O2 + 8 H(+)(in) = 4 Fe(III)-[cytochrome c] + 2 H2O + 4 H(+)(out). In terms of biological role, component of the cytochrome c oxidase, the last enzyme in the mitochondrial electron transport chain which drives oxidative phosphorylation. The respiratory chain contains 3 multisubunit complexes succinate dehydrogenase (complex II, CII), ubiquinol-cytochrome c oxidoreductase (cytochrome b-c1 complex, complex III, CIII) and cytochrome c oxidase (complex IV, CIV), that cooperate to transfer electrons derived from NADH and succinate to molecular oxygen, creating an electrochemical gradient over the inner membrane that drives transmembrane transport and the ATP synthase. Cytochrome c oxidase is the component of the respiratory chain that catalyzes the reduction of oxygen to water. Electrons originating from reduced cytochrome c in the intermembrane space (IMS) are transferred via the dinuclear copper A center (CU(A)) of subunit 2 and heme A of subunit 1 to the active site in subunit 1, a binuclear center (BNC) formed by heme A3 and copper B (CU(B)). The BNC reduces molecular oxygen to 2 water molecules using 4 electrons from cytochrome c in the IMS and 4 protons from the mitochondrial matrix. The sequence is that of Cytochrome c oxidase subunit 2 (MT-CO2) from Rhea americana (Greater rhea).